We begin with the raw amino-acid sequence, 324 residues long: Glycerol-3-phosphate dehydrogenase [NAD(P)+] (324 aa).

The NADPH site is built by Trp15, Arg35, and Lys101. The sn-glycerol 3-phosphate site is built by Lys101 and Gly129. Residue Ala133 coordinates NADPH. Sn-glycerol 3-phosphate is bound by residues Lys184, Asp237, Ser247, Arg248, and Asn249. Catalysis depends on Lys184, which acts as the Proton acceptor. Arg248 contributes to the NADPH binding site. Val272 and Glu274 together coordinate NADPH.

The protein belongs to the NAD-dependent glycerol-3-phosphate dehydrogenase family.

Its subcellular location is the cytoplasm. It catalyses the reaction sn-glycerol 3-phosphate + NAD(+) = dihydroxyacetone phosphate + NADH + H(+). It carries out the reaction sn-glycerol 3-phosphate + NADP(+) = dihydroxyacetone phosphate + NADPH + H(+). Its pathway is membrane lipid metabolism; glycerophospholipid metabolism. In terms of biological role, catalyzes the reduction of the glycolytic intermediate dihydroxyacetone phosphate (DHAP) to sn-glycerol 3-phosphate (G3P), the key precursor for phospholipid synthesis. In Gluconobacter oxydans (strain 621H) (Gluconobacter suboxydans), this protein is Glycerol-3-phosphate dehydrogenase [NAD(P)+].